Consider the following 187-residue polypeptide: MKYLITGLGNIGEEYRNTRHNIGFTVLDALAKASNLVFTDGRYGATATLSLKGRQLILLKPSTYMNLSGNAVRYWMQKENIPLENVLIVVDDLALPFGTLRLKGKGSDAGHNGLKHIAATLGTQDYARLRFGIGNDFPRGGQIDFVLGHFTDEDLKTMDERVATACDIIKSFCLAGISITMNQYNKK.

A tRNA-binding site is contributed by Y15. H20 serves as the catalytic Proton acceptor. Y64, N66, and N112 together coordinate tRNA.

Belongs to the PTH family. Monomer.

The protein localises to the cytoplasm. The enzyme catalyses an N-acyl-L-alpha-aminoacyl-tRNA + H2O = an N-acyl-L-amino acid + a tRNA + H(+). Hydrolyzes ribosome-free peptidyl-tRNAs (with 1 or more amino acids incorporated), which drop off the ribosome during protein synthesis, or as a result of ribosome stalling. Functionally, catalyzes the release of premature peptidyl moieties from peptidyl-tRNA molecules trapped in stalled 50S ribosomal subunits, and thus maintains levels of free tRNAs and 50S ribosomes. The chain is Peptidyl-tRNA hydrolase from Phocaeicola vulgatus (strain ATCC 8482 / DSM 1447 / JCM 5826 / CCUG 4940 / NBRC 14291 / NCTC 11154) (Bacteroides vulgatus).